A 150-amino-acid polypeptide reads, in one-letter code: Protein Smg homolog (150 aa).

Belongs to the Smg family.

This is Protein Smg homolog from Methylibium petroleiphilum (strain ATCC BAA-1232 / LMG 22953 / PM1).